We begin with the raw amino-acid sequence, 115 residues long: Regulator of ribonuclease activity B (115 aa).

The protein belongs to the RraB family. In terms of assembly, interacts with the C-terminal region of Rne.

The protein resides in the cytoplasm. Its function is as follows. Globally modulates RNA abundance by binding to RNase E (Rne) and regulating its endonucleolytic activity. Can modulate Rne action in a substrate-dependent manner by altering the composition of the degradosome. The sequence is that of Regulator of ribonuclease activity B from Aeromonas hydrophila subsp. hydrophila (strain ATCC 7966 / DSM 30187 / BCRC 13018 / CCUG 14551 / JCM 1027 / KCTC 2358 / NCIMB 9240 / NCTC 8049).